A 309-amino-acid polypeptide reads, in one-letter code: Pantoate--beta-alanine ligase (309 aa).

It belongs to the pantothenate synthetase family.

Its subcellular location is the cytoplasm. The protein localises to the nucleus. The enzyme catalyses (R)-pantoate + beta-alanine + ATP = (R)-pantothenate + AMP + diphosphate + H(+). It functions in the pathway cofactor biosynthesis; (R)-pantothenate biosynthesis; (R)-pantothenate from (R)-pantoate and beta-alanine: step 1/1. Required for pantothenic acid biosynthesis. This is Pantoate--beta-alanine ligase (PAN6) from Saccharomyces cerevisiae (strain ATCC 204508 / S288c) (Baker's yeast).